A 119-amino-acid polypeptide reads, in one-letter code: Ribonuclease P protein component (119 aa).

Belongs to the RnpA family. Consists of a catalytic RNA component (M1 or rnpB) and a protein subunit.

It catalyses the reaction Endonucleolytic cleavage of RNA, removing 5'-extranucleotides from tRNA precursor.. Functionally, RNaseP catalyzes the removal of the 5'-leader sequence from pre-tRNA to produce the mature 5'-terminus. It can also cleave other RNA substrates such as 4.5S RNA. The protein component plays an auxiliary but essential role in vivo by binding to the 5'-leader sequence and broadening the substrate specificity of the ribozyme. This chain is Ribonuclease P protein component, found in Bifidobacterium longum (strain DJO10A).